The following is a 367-amino-acid chain: Cyclin-D5-1 (367 aa).

The tract at residues Q307–T333 is disordered.

The protein belongs to the cyclin family. Cyclin D subfamily.

The sequence is that of Cyclin-D5-1 (CYCD5-1) from Oryza sativa subsp. japonica (Rice).